The primary structure comprises 332 residues: Glycerol-3-phosphate dehydrogenase [NAD(P)+] (332 aa).

Positions 11, 30, and 108 each coordinate NADPH. The sn-glycerol 3-phosphate site is built by Lys108, Gly137, and Ser139. Residue Ala141 participates in NADPH binding. Sn-glycerol 3-phosphate-binding residues include Lys192, Asp245, Ser255, Arg256, and Asn257. The active-site Proton acceptor is the Lys192. Arg256 is an NADPH binding site. Residues Val280 and Glu282 each contribute to the NADPH site.

It belongs to the NAD-dependent glycerol-3-phosphate dehydrogenase family.

It localises to the cytoplasm. The catalysed reaction is sn-glycerol 3-phosphate + NAD(+) = dihydroxyacetone phosphate + NADH + H(+). It carries out the reaction sn-glycerol 3-phosphate + NADP(+) = dihydroxyacetone phosphate + NADPH + H(+). It participates in membrane lipid metabolism; glycerophospholipid metabolism. Functionally, catalyzes the reduction of the glycolytic intermediate dihydroxyacetone phosphate (DHAP) to sn-glycerol 3-phosphate (G3P), the key precursor for phospholipid synthesis. The protein is Glycerol-3-phosphate dehydrogenase [NAD(P)+] of Paraburkholderia phymatum (strain DSM 17167 / CIP 108236 / LMG 21445 / STM815) (Burkholderia phymatum).